Reading from the N-terminus, the 485-residue chain is NADH-quinone oxidoreductase subunit N (485 aa).

Helical transmembrane passes span Leu-8–Ile-28, Phe-35–Val-55, Gly-71–Ala-91, Phe-105–Leu-125, Ser-127–Phe-147, Tyr-159–Ala-179, Leu-203–Phe-223, Pro-235–Met-255, Val-271–Gln-291, Leu-297–Gln-317, Val-326–Leu-346, Ala-373–Ile-393, Trp-408–Val-430, and Tyr-450–Trp-470.

This sequence belongs to the complex I subunit 2 family. NDH-1 is composed of 13 different subunits. Subunits NuoA, H, J, K, L, M, N constitute the membrane sector of the complex.

It is found in the cell inner membrane. The catalysed reaction is a quinone + NADH + 5 H(+)(in) = a quinol + NAD(+) + 4 H(+)(out). Functionally, NDH-1 shuttles electrons from NADH, via FMN and iron-sulfur (Fe-S) centers, to quinones in the respiratory chain. The immediate electron acceptor for the enzyme in this species is believed to be ubiquinone. Couples the redox reaction to proton translocation (for every two electrons transferred, four hydrogen ions are translocated across the cytoplasmic membrane), and thus conserves the redox energy in a proton gradient. The protein is NADH-quinone oxidoreductase subunit N of Shigella boydii serotype 4 (strain Sb227).